Reading from the N-terminus, the 89-residue chain is Putative regulatory protein Nther_1328 (89 aa).

It belongs to the RemA family.

This is Putative regulatory protein Nther_1328 from Natranaerobius thermophilus (strain ATCC BAA-1301 / DSM 18059 / JW/NM-WN-LF).